We begin with the raw amino-acid sequence, 201 residues long: MYTLLSGLYKYMFQKDEYCILILGLDNAGKTTFLEQSKTRFNKNYKGMSLSKITTTVGLNIGTVDVGKARLMFWDLGGQEELQSLWDKYYAECHGVIYVIDSTDEERLAESKQAFEKVVTSEALCGVPVLVLANKQDVETCLSIPDIKTAFSDCTSKIGRRDCLTQACSALTGKGVREGIEWMVKCVVRNVHRPPRQRDIT.

Met1 is modified (N-acetylmethionine). Residues Gly24–Thr31, Asp75–Gln79, and Asn134–Asp137 each bind GTP.

It belongs to the small GTPase superfamily. Arf family. Interacts with SYS1.

The protein localises to the golgi apparatus. The protein resides in the trans-Golgi network. Its function is as follows. Trans-Golgi-associated GTPase that regulates protein sorting. Controls the targeting of ARL1 and its effector to the trans-Golgi. Required for the lipidation of chylomicrons in the intestine and required for VLDL lipidation in the liver. This is ADP-ribosylation factor-related protein 1 (ARFRP1) from Pongo abelii (Sumatran orangutan).